A 286-amino-acid chain; its full sequence is ATP synthase gamma chain (286 aa).

It belongs to the ATPase gamma chain family. F-type ATPases have 2 components, CF(1) - the catalytic core - and CF(0) - the membrane proton channel. CF(1) has five subunits: alpha(3), beta(3), gamma(1), delta(1), epsilon(1). CF(0) has three main subunits: a, b and c.

Its subcellular location is the cell membrane. Its function is as follows. Produces ATP from ADP in the presence of a proton gradient across the membrane. The gamma chain is believed to be important in regulating ATPase activity and the flow of protons through the CF(0) complex. This Bacillus cereus (strain G9842) protein is ATP synthase gamma chain.